A 461-amino-acid chain; its full sequence is D-phenylhydantoinase (461 aa).

A divalent metal cation is bound by residues His59, His61, and Lys151. An N6-carboxylysine modification is found at Lys151. Residue Tyr156 coordinates substrate. Residues His182 and His239 each contribute to the a divalent metal cation site. Residue Ser286 coordinates substrate. An a divalent metal cation-binding site is contributed by Asp313. A substrate-binding site is contributed by Asn335.

The protein belongs to the metallo-dependent hydrolases superfamily. Hydantoinase/dihydropyrimidinase family. Homotetramer. Zn(2+) serves as cofactor. The cofactor is Ni(2+). Co(2+) is required as a cofactor. It depends on Mn(2+) as a cofactor. Carboxylation allows a single lysine to coordinate two divalent metal cations.

It catalyses the reaction D-5-phenylhydantoin + H2O = N-carbamoyl-D-phenylglycine + H(+). In terms of biological role, catalyzes the stereospecific hydrolysis of the cyclic amide bond of D-hydantoin derivatives with an aromatic side chains at the 5'-position. Has no activity on dihydropyrimidines. The physiological function is unknown. In Escherichia coli (strain K12), this protein is D-phenylhydantoinase (hyuA).